Here is a 55-residue protein sequence, read N- to C-terminus: Conotoxin vc5b (55 aa).

Positions 1–15 are cleaved as a signal peptide; that stretch reads VILLLLIASAPSVDA. Residues 16–41 constitute a propeptide that is removed on maturation; that stretch reads QPKTKDDVPLAPLHDNAKSALQHLNQ. Gln53 is subject to Glutamine amide.

In terms of processing, contains 2 disulfide bonds that can be either 'C1-C3, C2-C4' or 'C1-C4, C2-C3', since these disulfide connectivities have been observed for conotoxins with cysteine framework V (for examples, see AC P0DQQ7 and AC P81755). Expressed by the venom duct.

It localises to the secreted. In Conus victoriae (Queen Victoria cone), this protein is Conotoxin vc5b.